The primary structure comprises 205 residues: Putative 3-methyladenine DNA glycosylase (205 aa).

Belongs to the DNA glycosylase MPG family.

This chain is Putative 3-methyladenine DNA glycosylase, found in Mycolicibacterium paratuberculosis (strain ATCC BAA-968 / K-10) (Mycobacterium paratuberculosis).